A 358-amino-acid chain; its full sequence is Feruloyl esterase B (358 aa).

The signal sequence occupies residues 1-18 (MAIPLVLLLAWLLPTVFA). The interval 19 to 291 (ASLTQVSNFG…VSVVLDWFGI (273 aa)) is catalytic. Residue Ser136 is the Charge relay system of the active site. Asn179 and Asn246 each carry an N-linked (GlcNAc...) asparagine glycan. The segment at 292–321 (TGGGGGNGGGSGSTTTTTSATTTSTGPTGG) is gly/Thr-rich linker. A disordered region spans residues 297–318 (GNGGGSGSTTTTTSATTTSTGP). Residues 304–318 (STTTTTSATTTSTGP) are compositionally biased toward low complexity. The 37-residue stretch at 322–358 (CTAAHWDQCGGNGYTGCTSCASPYTCQKVNDYYSQCL) folds into the CBM1 domain.

Belongs to the carbohydrate esterase 1 (CE1) family. Feruloyl esterase type B subfamily.

The protein resides in the secreted. It catalyses the reaction feruloyl-polysaccharide + H2O = ferulate + polysaccharide.. Its function is as follows. Involved in degradation of plant cell walls. Hydrolyzes the feruloyl-arabinose ester bond in arabinoxylans as well as the feruloyl-galactose and feruloyl-arabinose ester bonds in pectin. Active against methyl esters of caffeate (MCA), but not sinapate (MSA). The protein is Feruloyl esterase B (faeB) of Talaromyces stipitatus (strain ATCC 10500 / CBS 375.48 / QM 6759 / NRRL 1006) (Penicillium stipitatum).